Here is a 312-residue protein sequence, read N- to C-terminus: MALNLKGKSFLKLLDFSPREIRYLLDLSRDLKRAKYAGNEVQTMQGKNVVLLFQKNSTRTRCAFEVATLDQGAHVTYLGPSGSQFGKKESVADTAKVLGRMYDAIEFRGYEQSVVEDLAKYSGVPVYNGLTNEFHPTQILADFLTVEEYKGNLKGLKFVFAGDTRNNVATSLMVGCAKMGMHFVGAAPKELWPSEDLVNQSKEIAKETNATISFVEDMKQACSDADVIYTDVWVSMGEPAEVWESRINLLKPFQVNMDAIKVAKPDVIFMHCLPSFHDLNTEVGRQIYEKFGIPEMEVTNEVFESKHSVVFE.

Carbamoyl phosphate is bound by residues 57–60 (STRT), Q84, R108, and 135–138 (HPTQ). L-ornithine is bound by residues N167, D231, and 235–236 (SM). Carbamoyl phosphate is bound at residue 272-273 (CL).

The protein belongs to the aspartate/ornithine carbamoyltransferase superfamily. OTCase family.

It localises to the cytoplasm. It catalyses the reaction carbamoyl phosphate + L-ornithine = L-citrulline + phosphate + H(+). It participates in amino-acid degradation; L-arginine degradation via ADI pathway; carbamoyl phosphate from L-arginine: step 2/2. Its function is as follows. Reversibly catalyzes the transfer of the carbamoyl group from carbamoyl phosphate (CP) to the N(epsilon) atom of ornithine (ORN) to produce L-citrulline. This chain is Ornithine carbamoyltransferase, catabolic (arcB), found in Mycoplasma capricolum subsp. capripneumoniae.